Reading from the N-terminus, the 205-residue chain is Ribosomal RNA small subunit methyltransferase G (205 aa).

S-adenosyl-L-methionine contacts are provided by residues G73, L78, 124–125, and R138; that span reads VE.

This sequence belongs to the methyltransferase superfamily. RNA methyltransferase RsmG family.

Its subcellular location is the cytoplasm. It carries out the reaction guanosine(527) in 16S rRNA + S-adenosyl-L-methionine = N(7)-methylguanosine(527) in 16S rRNA + S-adenosyl-L-homocysteine. Specifically methylates the N7 position of guanine in position 527 of 16S rRNA. The polypeptide is Ribosomal RNA small subunit methyltransferase G (Actinobacillus pleuropneumoniae serotype 7 (strain AP76)).